The sequence spans 62 residues: Large ribosomal subunit protein bL28 (62 aa).

Positions 1–24 are disordered; sequence MARKCVITGRKTKAGNNRSHAMNS. Over residues 14-24 the composition is skewed to polar residues; the sequence is AGNNRSHAMNS.

The protein belongs to the bacterial ribosomal protein bL28 family.

The chain is Large ribosomal subunit protein bL28 from Bacillus pumilus (strain SAFR-032).